A 265-amino-acid chain; its full sequence is uncharacterized protein (265 aa).

The N-terminal stretch at 1–23 is a signal peptide; it reads MNYFRILYCSVLLFFSFFSCTSA. The NodB homology domain occupies 67–248; the sequence is KEIYLTFDNG…TLKQQGYTFK (182 aa).

The protein belongs to the polysaccharide deacetylase family.

This is an uncharacterized protein from Geobacillus stearothermophilus (Bacillus stearothermophilus).